The sequence spans 338 residues: Lipoate-protein ligase A (338 aa).

A BPL/LPL catalytic domain is found at 29-216 (PATQRVLFLW…AFFAHYGERV (188 aa)). ATP-binding positions include Arg-71, 76–79 (GAVF), and Lys-134. A (R)-lipoate-binding site is contributed by Lys-134.

It belongs to the LplA family. Monomer.

It is found in the cytoplasm. The catalysed reaction is L-lysyl-[lipoyl-carrier protein] + (R)-lipoate + ATP = N(6)-[(R)-lipoyl]-L-lysyl-[lipoyl-carrier protein] + AMP + diphosphate + H(+). Its pathway is protein modification; protein lipoylation via exogenous pathway; protein N(6)-(lipoyl)lysine from lipoate: step 1/2. It functions in the pathway protein modification; protein lipoylation via exogenous pathway; protein N(6)-(lipoyl)lysine from lipoate: step 2/2. Catalyzes both the ATP-dependent activation of exogenously supplied lipoate to lipoyl-AMP and the transfer of the activated lipoyl onto the lipoyl domains of lipoate-dependent enzymes. This is Lipoate-protein ligase A from Shigella sonnei (strain Ss046).